The chain runs to 181 residues: SecB-like chaperone Rv1957 (181 aa).

N-acetylthreonine is present on Thr2.

The protein belongs to the SecB-like family. Homotetramer, interacts with antitoxin HigA1.

In terms of biological role, chaperone component of an atypical, type II toxin-antitoxin chaperone (TAC) system. Prevents antitoxin HigA1 aggregation in vitro at a 1:3 chaperone:antitoxin ratio, probably also protects antitoxin HigA1 from protease. Required for neutralization of toxin HigB1 upon ectopic expression in Mycobacterium marinum or E.coli. When expressed in E.coli complements a secB deletion, restores export of OmpA and MBP and inhibits aggregation of proOmpC although it is less efficient than endogenous SecB. Complements the general chaperone function of E.coli SecB less well. The sequence is that of SecB-like chaperone Rv1957 (secBL) from Mycobacterium tuberculosis (strain ATCC 25618 / H37Rv).